Consider the following 625-residue polypeptide: RecQ-mediated genome instability protein 1 (625 aa).

An N-acetylmethionine modification is found at Met1. Ser225 carries the phosphoserine modification. The segment at 257 to 282 is disordered; it reads LTANNDTSSERCFTTGSSSNTIPTRQ. 2 positions are modified to phosphoserine: Ser284 and Ser292. Residues Lys334, Lys387, and Lys426 each participate in a glycyl lysine isopeptide (Lys-Gly) (interchain with G-Cter in SUMO2) cross-link.

The protein belongs to the RMI1 family. As to quaternary structure, component of the RMI complex, containing at least TOP3A, RMI1 and RMI2. The RMI complex interacts with BLM. Directly interacts with RMI2 and TOP3A. May bind DHJ. Interacts (via N-terminal region) with BLM; the interaction is direct.

It is found in the nucleus. Essential component of the RMI complex, a complex that plays an important role in the processing of homologous recombination intermediates to limit DNA crossover formation in cells. Promotes TOP3A binding to double Holliday junctions (DHJ) and hence stimulates TOP3A-mediated dissolution. Required for BLM phosphorylation during mitosis. Within the BLM complex, required for BLM and TOP3A stability. This is RecQ-mediated genome instability protein 1 (RMI1) from Homo sapiens (Human).